The sequence spans 194 residues: Small ribosomal subunit protein uS4c (194 aa).

The S4 RNA-binding domain occupies Met84–Lys144.

It belongs to the universal ribosomal protein uS4 family. Part of the 30S ribosomal subunit. Contacts protein S5. The interaction surface between S4 and S5 is involved in control of translational fidelity.

It is found in the plastid. Its subcellular location is the chloroplast. Its function is as follows. One of the primary rRNA binding proteins, it binds directly to 16S rRNA where it nucleates assembly of the body of the 30S subunit. With S5 and S12 plays an important role in translational accuracy. The chain is Small ribosomal subunit protein uS4c (rps4) from Bigelowiella natans (Pedinomonas minutissima).